The chain runs to 261 residues: Thioredoxin-like protein HCF164, chloroplastic (261 aa).

The transit peptide at 1-40 (MARLVFSLNLPSSHGFNLSPRNLQSFFVTQTGAPRFRAVR) directs the protein to the chloroplast. The disordered stretch occupies residues 39 to 91 (VRCKPNPESSETKQEKLVIDNGETSSASKEVESSSSVADSSSSSSSGFPESPN). Residues 63–84 (SSASKEVESSSSVADSSSSSSS) are compositionally biased toward low complexity. One can recognise a Thioredoxin domain in the interval 101-229 (VTVIAALSLF…LVENVNALAA (129 aa)). Catalysis depends on nucleophile residues C150 and C153. An intrachain disulfide couples C150 to C153.

It belongs to the thioredoxin family. As to quaternary structure, interacts in vitro with LTO1.

Its subcellular location is the plastid. The protein resides in the chloroplast thylakoid membrane. Its function is as follows. Thiol-disulfide oxidoreductase that participates in various redox reactions in the chloroplast. Mediates the reduction of PSI-N in the thylakoid lumen. May interact and probably reduce other target proteins of the thylakoid membrane, such as FTSH2, FTSH8, LHCB5, atpA, atpB, atpE, petA and petC. Involved in the biogenesis of the plastid cytochrome b6f complex. Reducing equivalents are provided by stromal M-type thioredoxins and probably transduced through the thylakoid membrane by CCDA. Possesses low insulin disulfide bonds reducing activity. The polypeptide is Thioredoxin-like protein HCF164, chloroplastic (Arabidopsis thaliana (Mouse-ear cress)).